We begin with the raw amino-acid sequence, 260 residues long: uncharacterized protein (260 aa).

This is an uncharacterized protein from Aquifex aeolicus (strain VF5).